A 238-amino-acid chain; its full sequence is ATP synthase subunit a (238 aa).

The next 4 helical transmembrane spans lie at L17–C37, I80–I100, D112–I132, and I194–I214.

The protein belongs to the ATPase A chain family. In terms of assembly, F-type ATPases have 2 components, CF(1) - the catalytic core - and CF(0) - the membrane proton channel. CF(1) has five subunits: alpha(3), beta(3), gamma(1), delta(1), epsilon(1). CF(0) has three main subunits: a(1), b(2) and c(9-12). The alpha and beta chains form an alternating ring which encloses part of the gamma chain. CF(1) is attached to CF(0) by a central stalk formed by the gamma and epsilon chains, while a peripheral stalk is formed by the delta and b chains.

The protein localises to the cell membrane. In terms of biological role, key component of the proton channel; it plays a direct role in the translocation of protons across the membrane. This is ATP synthase subunit a from Listeria welshimeri serovar 6b (strain ATCC 35897 / DSM 20650 / CCUG 15529 / CIP 8149 / NCTC 11857 / SLCC 5334 / V8).